A 470-amino-acid polypeptide reads, in one-letter code: mRNA export factor ICP27 homolog (470 aa).

Disordered regions lie at residues 1-31 and 73-202; these read MALS…TGGD and FSAS…AGDR. Over residues 73–85 the composition is skewed to polar residues; the sequence is FSASPQRAQPSNP. Composition is skewed to basic residues over residues 94–107 and 178–187; these read HGRR…RRNN and RVHRNRRRGN. Zn(2+) is bound by residues Cys359, His437, Cys441, and Cys446. A CHC2-type zinc finger spans residues 359 to 446; sequence CYLSSSGSPT…HKRRCKADTC (88 aa).

Belongs to the HHV-1 ICP27 protein family. Homodimer. Homodimerization is required for transactivation. Associates in a complex with RNA, and host export factors NXF1/TAP and ALYREF; these interactions allow nuclear export of viral transcripts. Interacts with three host shuttling SR proteins SRSF1, SRSF3 and SRSF7. Interacts with host SRPK1. Interacts with IE62; this interaction enhances IE62 transactivation.

The protein resides in the host cytoplasm. Its subcellular location is the host nucleus. Functionally, multifunctional regulator of the expression of viral genes that mediates nuclear export of viral intronless mRNAs. This immediate early (EI) protein promotes the nuclear export of viral intronless mRNAs by interacting with mRNAs and host NXF1/TAP. This chain is mRNA export factor ICP27 homolog, found in Equine herpesvirus 1 (strain Kentucky A) (EHV-1).